Reading from the N-terminus, the 49-residue chain is Large ribosomal subunit protein bL33 (49 aa).

Belongs to the bacterial ribosomal protein bL33 family.

The protein is Large ribosomal subunit protein bL33 of Pelotomaculum thermopropionicum (strain DSM 13744 / JCM 10971 / SI).